The following is a 906-amino-acid chain: Catenin alpha-1 (906 aa).

N-acetylthreonine is present on Thr2. The interval 2-228 is involved in homodimerization; sequence TAVHAGNINF…PILYTASQAC (227 aa). Lys57 is covalently cross-linked (Glycyl lysine isopeptide (Lys-Gly) (interchain with G-Cter in SUMO2)). Residues 97-148 are interaction with JUP and CTNNB1; the sequence is VRKQGDLMKAAAGEFADDPCSSVKRGNMVRAARALLSAVTRLLILADMADVY. Phosphoserine occurs at positions 264, 268, 295, and 297. Positions 325–394 are interaction with alpha-actinin; the sequence is TRDDRRERIV…AVMDHVSDSF (70 aa). Thr634 bears the Phosphothreonine mark. Ser641 carries the post-translational modification Phosphoserine; by CK2. Thr645 bears the Phosphothreonine mark. A phosphoserine; by CK1 mark is found at Ser652 and Ser655. The residue at position 658 (Thr658) is a Phosphothreonine; by CK1. Lys797 is covalently cross-linked (Glycyl lysine isopeptide (Lys-Gly) (interchain with G-Cter in SUMO2)). A Phosphoserine modification is found at Ser851. A compositionally biased stretch (basic and acidic residues) spans 864 to 880; it reads PEKKPLVKREKQDETQT. Residues 864 to 894 are disordered; that stretch reads PEKKPLVKREKQDETQTKIKRASQKKHVNPV. Residues 881 to 891 are compositionally biased toward basic residues; the sequence is KIKRASQKKHV.

The protein belongs to the vinculin/alpha-catenin family. Monomer and homodimer; the monomer preferentially binds to CTNNB1 and the homodimer to actin. Component of an cadherin:catenin adhesion complex composed of at least of CDH26, beta-catenin/CTNNB1, alpha-catenin/CTNNA1 and p120 catenin/CTNND1. Possible component of an E-cadherin/ catenin adhesion complex together with E-cadherin/CDH1 and beta-catenin/CTNNB1 or gamma-catenin/JUP; the complex is located to adherens junctions. The stable association of CTNNA1 is controversial as CTNNA1 was shown not to bind to F-actin when assembled in the complex. Alternatively, the CTNNA1-containing complex may be linked to F-actin by other proteins such as LIMA1. Binds AFDN and F-actin. Interacts with ARHGAP21. Interacts with AJUBA. Interacts with LIMA1. Interacts with vinculin/VCL. Interacts with TJP2/ZO2 (via N-terminus). Interacts with TJP1/ZO1 (via N-terminus). Post-translationally, sumoylated. In terms of processing, phosphorylation seems to contribute to the strength of cell-cell adhesion rather than to the basic capacity for cell-cell adhesion. Ubiquitously expressed in normal tissues. In terms of tissue distribution, abundantly expressed in brain and cerebellum, also expressed in the placenta, liver, lung, colon, heart, pancreas, stomach and thymus.

The protein localises to the cytoplasm. It is found in the cytoskeleton. The protein resides in the cell junction. Its subcellular location is the adherens junction. It localises to the cell membrane. The protein localises to the nucleus. Associates with the cytoplasmic domain of a variety of cadherins. The association of catenins to cadherins produces a complex which is linked to the actin filament network, and which seems to be of primary importance for cadherins cell-adhesion properties. Can associate with both E- and N-cadherins. Originally believed to be a stable component of E-cadherin/catenin adhesion complexes and to mediate the linkage of cadherins to the actin cytoskeleton at adherens junctions. In contrast, cortical actin was found to be much more dynamic than E-cadherin/catenin complexes and CTNNA1 was shown not to bind to F-actin when assembled in the complex suggesting a different linkage between actin and adherens junctions components. The homodimeric form may regulate actin filament assembly and inhibit actin branching by competing with the Arp2/3 complex for binding to actin filaments. Involved in the regulation of WWTR1/TAZ, YAP1 and TGFB1-dependent SMAD2 and SMAD3 nuclear accumulation. May play a crucial role in cell differentiation. This chain is Catenin alpha-1, found in Homo sapiens (Human).